A 173-amino-acid chain; its full sequence is Cytochrome c-type biogenesis protein CcmE (173 aa).

Topologically, residues 1–8 are cytoplasmic; that stretch reads MNPRRKSR. A helical; Signal-anchor for type II membrane protein transmembrane segment spans residues 9–29; that stretch reads FKLVIFVVLGIAIASGLMLYA. The Periplasmic segment spans residues 30-173; the sequence is LRQNIDLFYT…RDRQEKEGAK (144 aa). Heme contacts are provided by His-131 and Tyr-135. The disordered stretch occupies residues 152–173; the sequence is GIKAADLKGESARDRQEKEGAK. The segment covering 156–173 has biased composition (basic and acidic residues); the sequence is ADLKGESARDRQEKEGAK.

This sequence belongs to the CcmE/CycJ family.

It is found in the cell inner membrane. Functionally, heme chaperone required for the biogenesis of c-type cytochromes. Transiently binds heme delivered by CcmC and transfers the heme to apo-cytochromes in a process facilitated by CcmF and CcmH. The polypeptide is Cytochrome c-type biogenesis protein CcmE (Haemophilus influenzae (strain PittEE)).